Here is a 166-residue protein sequence, read N- to C-terminus: UPF0561 protein C2orf68 homolog (166 aa).

Residues 36 to 49 (RDDYDKKVKQAAKE) are compositionally biased toward basic and acidic residues. The disordered stretch occupies residues 36 to 108 (RDDYDKKVKQ…EPEPPGHQLF (73 aa)).

This sequence belongs to the UPF0561 family.

This is UPF0561 protein C2orf68 homolog from Bos taurus (Bovine).